The chain runs to 144 residues: Large ribosomal subunit protein uL11 (144 aa).

This sequence belongs to the universal ribosomal protein uL11 family. In terms of assembly, part of the ribosomal stalk of the 50S ribosomal subunit. Interacts with L10 and the large rRNA to form the base of the stalk. L10 forms an elongated spine to which L12 dimers bind in a sequential fashion forming a multimeric L10(L12)X complex. In terms of processing, one or more lysine residues are methylated.

Its function is as follows. Forms part of the ribosomal stalk which helps the ribosome interact with GTP-bound translation factors. The chain is Large ribosomal subunit protein uL11 from Deinococcus deserti (strain DSM 17065 / CIP 109153 / LMG 22923 / VCD115).